Here is a 134-residue protein sequence, read N- to C-terminus: Replication enhancer protein (134 aa).

This sequence belongs to the geminiviridae replication enhancer protein family. As to quaternary structure, homooligomer. Interacts with the replication-associated protein (REP). Interacts with host proliferating cell nuclear antigen (PCNA). Interacts with host retinoblastoma-related protein 1 (RBR1), and may thereby deregulate the host cell cycle. Oligomerization and interaction with PCNA are necessary for optimal replication enhancement.

In terms of biological role, increases viral DNA accumulation. Enhances infectivity and symptom expression. The sequence is that of Replication enhancer protein from African cassava mosaic virus (isolate West Kenyan 844) (ACMV).